The chain runs to 100 residues: UPF0213 protein YhbQ (100 aa).

The region spanning 2-77 (TPWYLYLIRT…KQLTKRQKER (76 aa)) is the GIY-YIG domain.

This sequence belongs to the UPF0213 family.

The sequence is that of UPF0213 protein YhbQ from Salmonella choleraesuis (strain SC-B67).